The chain runs to 166 residues: Nicotine metabolites export pump subunit NepB (166 aa).

Helical transmembrane passes span 51-71 (LHAWLYLGSAITTEVTGTVIL), 77-97 (FQLPAQTTAAMALYAFSFFLL), 108-128 (VAYATWSGLGTVAVAFAGAII), and 133-153 (VTLGRITAITAVIGGIVILNL).

This sequence belongs to the drug/metabolite transporter (DMT) superfamily. Small multidrug resistance (SMR) (TC 2.A.7.1) family. NepA/NepB subfamily. The efflux pump is composed of NepA and NepB.

The protein localises to the cell membrane. In terms of biological role, component of an efflux pump responsible for the transport of nicotine breakdown products, in particular methylamine, out of the cell. This pump apparently serves as a metabolic valve for nicotine catabolites and may protect the bacteria from the potentially toxic side effects of these compounds. This is Nicotine metabolites export pump subunit NepB (nepB) from Paenarthrobacter nicotinovorans (Arthrobacter nicotinovorans).